Consider the following 364-residue polypeptide: Polygalacturonase (364 aa).

The first 21 residues, M1–P21, serve as a signal peptide directing secretion. A propeptide spanning residues S22 to R27 is cleaved from the precursor. C30 and C45 are oxidised to a cystine. PbH1 repeat units follow at residues V158–S188, S189–S210, G211–S231, V240–T261, V269–Q291, and T303–G348. The Proton donor role is filled by D203. A disulfide bond links C205 and C221. The active site involves H225. Residue N276 is glycosylated (N-linked (GlcNAc...) asparagine). A disulfide bond links C331 and C336. Residue N340 is glycosylated (N-linked (GlcNAc...) asparagine). The cysteines at positions 355 and 364 are disulfide-linked.

The protein belongs to the glycosyl hydrolase 28 family.

It localises to the secreted. The catalysed reaction is (1,4-alpha-D-galacturonosyl)n+m + H2O = (1,4-alpha-D-galacturonosyl)n + (1,4-alpha-D-galacturonosyl)m.. In terms of biological role, involved in maceration and soft-rotting of plant tissue. Hydrolyzes the 1,4-alpha glycosidic bonds of de-esterified pectate in the smooth region of the plant cell wall. The chain is Polygalacturonase (PGN1) from Cochliobolus carbonum (Maize leaf spot fungus).